The sequence spans 111 residues: Large ribosomal subunit protein uL24 (111 aa).

It belongs to the universal ribosomal protein uL24 family. As to quaternary structure, part of the 50S ribosomal subunit.

In terms of biological role, one of two assembly initiator proteins, it binds directly to the 5'-end of the 23S rRNA, where it nucleates assembly of the 50S subunit. Functionally, one of the proteins that surrounds the polypeptide exit tunnel on the outside of the subunit. In Chlamydia muridarum (strain MoPn / Nigg), this protein is Large ribosomal subunit protein uL24.